The following is a 351-amino-acid chain: Methylthioribose-1-phosphate isomerase (351 aa).

Residues 51 to 53 (RGA), Arg94, and Gln199 each bind substrate. Asp240 functions as the Proton donor in the catalytic mechanism. 250–251 (NK) is a substrate binding site.

Belongs to the EIF-2B alpha/beta/delta subunits family. MtnA subfamily. As to quaternary structure, homodimer.

The catalysed reaction is 5-(methylsulfanyl)-alpha-D-ribose 1-phosphate = 5-(methylsulfanyl)-D-ribulose 1-phosphate. The protein operates within amino-acid biosynthesis; L-methionine biosynthesis via salvage pathway; L-methionine from S-methyl-5-thio-alpha-D-ribose 1-phosphate: step 1/6. In terms of biological role, catalyzes the interconversion of methylthioribose-1-phosphate (MTR-1-P) into methylthioribulose-1-phosphate (MTRu-1-P). In Bacillus thuringiensis (strain Al Hakam), this protein is Methylthioribose-1-phosphate isomerase.